We begin with the raw amino-acid sequence, 320 residues long: Putative S-adenosyl-L-methionine-dependent methyltransferase MAP_4078 (320 aa).

S-adenosyl-L-methionine-binding positions include Asp-132 and 161–162 (DL). The interval 294 to 320 (PPHDIEDAIPQTRFVAAQRTERTRPDR) is disordered.

The protein belongs to the UPF0677 family.

In terms of biological role, exhibits S-adenosyl-L-methionine-dependent methyltransferase activity. This is Putative S-adenosyl-L-methionine-dependent methyltransferase MAP_4078 from Mycolicibacterium paratuberculosis (strain ATCC BAA-968 / K-10) (Mycobacterium paratuberculosis).